The primary structure comprises 269 residues: Alcohol dehydrogenase-related 31 kDa protein (269 aa).

Y11–L34 lines the NAD(+) pocket. S139 lines the substrate pocket. Y152 acts as the Proton acceptor in catalysis.

The protein belongs to the short-chain dehydrogenases/reductases (SDR) family.

The sequence is that of Alcohol dehydrogenase-related 31 kDa protein (Adhr) from Drosophila lebanonensis (Fruit fly).